We begin with the raw amino-acid sequence, 223 residues long: Protein BTG4 (223 aa).

This sequence belongs to the BTG family. Interacts with CNOT7. Interacts with EIF4E. Interacts with CNOT8. As to expression, expressed in oocytes after germinal vesicle breakdown. Expressed in testis and in olfactory epithelium.

Its function is as follows. Adapter protein that bridges CNOT7, a catalytic subunit of the CCR4-NOT complex, to EIF4E. Facilitates maternal mRNAs decay during the maturation of oocytes and in the fertilized egg, and is required for the maternal-zygotic transition (MZT), zygotic cleavage and initiation of embryonic development. This Homo sapiens (Human) protein is Protein BTG4 (BTG4).